A 641-amino-acid chain; its full sequence is Epithelial sodium channel subunit beta (641 aa).

Over methionine 1–alanine 50 the chain is Cytoplasmic. Residues methionine 51 to isoleucine 71 form a helical membrane-spanning segment. Residues lysine 72–glycine 533 are Extracellular-facing. 9 disulfides stabilise this stretch: cysteine 98-cysteine 273, cysteine 185-cysteine 190, cysteine 197-cysteine 204, cysteine 250-cysteine 257, cysteine 362-cysteine 449, cysteine 387-cysteine 445, cysteine 391-cysteine 441, cysteine 400-cysteine 427, and cysteine 402-cysteine 416. N-linked (GlcNAc...) asparagine glycosylation occurs at asparagine 141. Asparagine 261 and asparagine 379 each carry an N-linked (GlcNAc...) asparagine glycan. Residues serine 534–isoleucine 554 form a helical membrane-spanning segment. At lysine 555–valine 641 the chain is on the cytoplasmic side. Residues glycine 596 to valine 641 form a disordered region. The PY motif; recruits WW domain-containing proteins and is thereby required for ubiquitination and inhibition of the channel by NEDD4 and NEDD4L motif lies at proline 617 to tyrosine 621. A compositionally biased stretch (acidic residues) spans valine 632–valine 641. 2 positions are modified to phosphoserine: serine 634 and serine 636.

The protein belongs to the amiloride-sensitive sodium channel (TC 1.A.6) family. SCNN1B subfamily. As to quaternary structure, component of the heterotrimeric epithelial sodium channel (ENaC) composed of an alpha/SCNN1A, a beta/SCNN1B and a gamma/SCNN1G subunit. Interacts with WWP1 (via WW domains). Interacts with WWP2 (via WW domains); inhibits the channel. Interacts with the full-length immature form of PCSK9 (pro-PCSK9). Interacts (N-glycosylated) with BPIFA1; the interaction is direct and inhibits the proteolytic processing of SCNN1A and SCNN1G and the activation of ENaC. In terms of processing, ubiquitinated. Can be ubiquitinated at multiple sites and undergo monoubiquitination and polyubiquitination. Ubiquitination by NEDD4 or NEDD4L inhibits the ENaC channel through endocytosis, intracellular retention and degradation of its individual subunits. However, some studies could not confirm the ubiquitination of this subunit of the ENaC. Phosphorylated on serine and threonine residues. Aldosterone and insulin increase the basal level of phosphorylation. Post-translationally, N-glycosylated. N-glycosylation is required for interaction with BPIFA1.

The protein localises to the apical cell membrane. It is found in the cytoplasmic vesicle membrane. It carries out the reaction Na(+)(in) = Na(+)(out). Originally identified and characterized by its inhibition by the diuretic drug amiloride. In terms of biological role, this is one of the three pore-forming subunits of the heterotrimeric epithelial sodium channel (ENaC), a critical regulator of sodium balance and fluid homeostasis. ENaC operates in epithelial tissues, where it mediates the electrodiffusion of sodium ions from extracellular fluid through the apical membrane of cells, with water following osmotically. It plays a key role in maintaining sodium homeostasis through electrogenic sodium reabsorption in the kidneys. Additionally, ENaC is essential for airway surface liquid homeostasis, which is crucial for proper mucus clearance. This is Epithelial sodium channel subunit beta from Oryctolagus cuniculus (Rabbit).